The following is a 133-amino-acid chain: Large ribosomal subunit protein uL22c (133 aa).

The protein belongs to the universal ribosomal protein uL22 family. As to quaternary structure, part of the 50S ribosomal subunit.

Its subcellular location is the plastid. The protein localises to the chloroplast. Its function is as follows. This protein binds specifically to 23S rRNA. Functionally, the globular domain of the protein is located near the polypeptide exit tunnel on the outside of the subunit, while an extended beta-hairpin is found that lines the wall of the exit tunnel in the center of the 70S ribosome. The sequence is that of Large ribosomal subunit protein uL22c (rpl22) from Manihot esculenta (Cassava).